A 725-amino-acid polypeptide reads, in one-letter code: NAD(+) hydrolase SARM1 (725 aa).

The transit peptide at 1–27 directs the protein to the mitochondrion; sequence MVLTILFSAYKLCRFFAMSSPRPGAER. Residues 60-100 form an ARM 1 repeat; sequence EVQGALERALPELQQALSALKQAGGGRAVGAGLAEVFQLVE. NAD(+) contacts are provided by residues Trp103, Arg110, 149 to 158, and 191 to 194; these read EQILVAENRR and HMFK. ARM repeat units follow at residues 114–153, 155–194, 197–236, 238–281, 282–315, 316–355, and 360–403; these read QGLCDAIRLEGGLDLLLRLLQAPELETRVQAARLLEQILV, ENRRDRVARIGLGVILNLAKEREPVELARSVAGILEHMFK, EETCQRLVAAGGLDAVLYWCRRTDPALLRHCALALANCAM, GGQA…LATN, KEVEREVERSGTLALVEPLVASLDPGRFARCLVD, ASDTSQGRGPDDLQRLVPLLDSSRMEAQCIGAFYLCAEAV, and KNRN…EEVP. SAM domains lie at 413-477 and 483-549; these read WKEA…LKTF and CDRS…MLHS. 2 positions are modified to phosphoserine: Ser549 and Ser559. The TIR domain maps to 561–704; sequence DVPDVFISYR…KIIRFLQGRS (144 aa). Residues 570–571 and Glu600 each bind NAD(+); that span reads RR. The active site involves Glu643. Residues 705–725 form a disordered region; the sequence is SRDSSAGSDTSLEGAAPMGPT.

The protein belongs to the SARM1 family. In terms of assembly, homooctamer; forms an octameric ring via SAM domains. Interacts with TICAM1/TRIF and thereby interferes with TICAM1/TRIF function. Interacts with MAPK10/JNK3 and SDC2 (via cytoplasmic domain). In terms of processing, phosphorylation at Ser-549 by JNK kinases (MAPK8, MAPK9 and /or MAPK10) enhance the NAD(+) hydrolase (NADase) activity. Phosphorylation at Ser-549 and subsequent activation takes place in response to oxidative stress conditions and inhibits mitochondrial respiration. Highest expression seen in the spleen and the brain, followed by lung, kidney, liver and other tissues.

The protein resides in the cytoplasm. Its subcellular location is the cell projection. It is found in the axon. It localises to the dendrite. The protein localises to the synapse. The protein resides in the mitochondrion. It carries out the reaction NAD(+) + H2O = ADP-D-ribose + nicotinamide + H(+). The enzyme catalyses NAD(+) = cyclic ADP-beta-D-ribose + nicotinamide + H(+). It catalyses the reaction NADP(+) + H2O = ADP-D-ribose 2'-phosphate + nicotinamide + H(+). With respect to regulation, autoinhibited: in the inactive state, the enzymatic TIR domain is held apart by the autoinhibiting ARM repeats. NAD(+)-binding to ARM repeats maintains an inactive state by promoting interaction between ARM repeats and the TIR domain, thereby facilitating inhibition of the enzymatic TIR domain. Following activation, possibly by nicotinamide mononucleotide (NMN), auto-inhibitory interactions are released, allowing self-association of the TIR domains and subsequent activation of the NAD(+) hydrolase (NADase) activity. Self-association of TIR domains is facilitated by the octamer of SAM domains. Functionally, NAD(+) hydrolase, which plays a key role in axonal degeneration following injury by regulating NAD(+) metabolism. Acts as a negative regulator of MYD88- and TRIF-dependent toll-like receptor signaling pathway by promoting Wallerian degeneration, an injury-induced form of programmed subcellular death which involves degeneration of an axon distal to the injury site. Wallerian degeneration is triggered by NAD(+) depletion: in response to injury, SARM1 is activated and catalyzes cleavage of NAD(+) into ADP-D-ribose (ADPR), cyclic ADPR (cADPR) and nicotinamide; NAD(+) cleavage promoting cytoskeletal degradation and axon destruction. Also able to hydrolyze NADP(+), but not other NAD(+)-related molecules. Can activate neuronal cell death in response to stress. Regulates dendritic arborization through the MAPK4-JNK pathway. Involved in innate immune response: inhibits both TICAM1/TRIF- and MYD88-dependent activation of JUN/AP-1, TRIF-dependent activation of NF-kappa-B and IRF3, and the phosphorylation of MAPK14/p38. This Sus scrofa (Pig) protein is NAD(+) hydrolase SARM1.